Consider the following 65-residue polypeptide: MSETITVNCPTCGKTVVWGEISPFRPFCSKRCQLIDLGEWAAEEKRIPSSGDLSESDDWSEEPKQ.

Residues Cys9, Cys12, Cys28, and Cys32 each contribute to the Zn(2+) site. The disordered stretch occupies residues 45-65; that stretch reads KRIPSSGDLSESDDWSEEPKQ. Over residues 54–65 the composition is skewed to acidic residues; sequence SESDDWSEEPKQ.

It belongs to the DNA gyrase inhibitor YacG family. In terms of assembly, interacts with GyrB. Zn(2+) serves as cofactor.

Functionally, inhibits all the catalytic activities of DNA gyrase by preventing its interaction with DNA. Acts by binding directly to the C-terminal domain of GyrB, which probably disrupts DNA binding by the gyrase. This Shigella boydii serotype 18 (strain CDC 3083-94 / BS512) protein is DNA gyrase inhibitor YacG.